The chain runs to 484 residues: UDP-N-acetylmuramate--L-alanine ligase (484 aa).

Gly128–Thr134 provides a ligand contact to ATP.

The protein belongs to the MurCDEF family.

Its subcellular location is the cytoplasm. It catalyses the reaction UDP-N-acetyl-alpha-D-muramate + L-alanine + ATP = UDP-N-acetyl-alpha-D-muramoyl-L-alanine + ADP + phosphate + H(+). Its pathway is cell wall biogenesis; peptidoglycan biosynthesis. Functionally, cell wall formation. The protein is UDP-N-acetylmuramate--L-alanine ligase of Shewanella loihica (strain ATCC BAA-1088 / PV-4).